The primary structure comprises 160 residues: Transcription elongation factor GreA (160 aa).

Positions 50-70 (AAREQQSFNEGRIQELEAKLS) form a coiled coil.

Belongs to the GreA/GreB family.

Its function is as follows. Necessary for efficient RNA polymerase transcription elongation past template-encoded arresting sites. The arresting sites in DNA have the property of trapping a certain fraction of elongating RNA polymerases that pass through, resulting in locked ternary complexes. Cleavage of the nascent transcript by cleavage factors such as GreA or GreB allows the resumption of elongation from the new 3'terminus. GreA releases sequences of 2 to 3 nucleotides. The sequence is that of Transcription elongation factor GreA from Legionella pneumophila (strain Corby).